The following is a 102-amino-acid chain: NADH-quinone oxidoreductase subunit K (102 aa).

The next 3 helical transmembrane spans lie at 5 to 25 (IAHYLTVSAVLFTLGIFGIFL), 31 to 51 (IIILMSIELILLAVNLNFIAF), and 66 to 86 (FVLTVAAAEAAIGLAILVVFF).

The protein belongs to the complex I subunit 4L family. As to quaternary structure, NDH-1 is composed of 14 different subunits. Subunits NuoA, H, J, K, L, M, N constitute the membrane sector of the complex.

It is found in the cell inner membrane. The enzyme catalyses a quinone + NADH + 5 H(+)(in) = a quinol + NAD(+) + 4 H(+)(out). In terms of biological role, NDH-1 shuttles electrons from NADH, via FMN and iron-sulfur (Fe-S) centers, to quinones in the respiratory chain. The immediate electron acceptor for the enzyme in this species is believed to be ubiquinone. Couples the redox reaction to proton translocation (for every two electrons transferred, four hydrogen ions are translocated across the cytoplasmic membrane), and thus conserves the redox energy in a proton gradient. This chain is NADH-quinone oxidoreductase subunit K, found in Chelativorans sp. (strain BNC1).